A 152-amino-acid polypeptide reads, in one-letter code: Ribosome maturation factor RimP (152 aa).

The protein belongs to the RimP family.

It is found in the cytoplasm. Functionally, required for maturation of 30S ribosomal subunits. The polypeptide is Ribosome maturation factor RimP (Desulfitobacterium hafniense (strain Y51)).